Consider the following 977-residue polypeptide: Fc receptor-like protein 5 (977 aa).

The first 15 residues, 1–15 (MLLWVILLVLAPVSG), serve as a signal peptide directing secretion. Residues 16 to 851 (QFARTPRPII…ANRSGPFATG (836 aa)) are Extracellular-facing. 8 Ig-like C2-type domains span residues 23–101 (PIIF…LDFS), 188–271 (PFTR…SVIS), 287–374 (PVLT…LSVT), 380–463 (PVLN…KAVS), 473–556 (PVLT…EVVS), 566–651 (PILT…ISLS), 659–744 (PILT…VTLK), and 752–834 (PVLT…ETVT). Intrachain disulfides connect cysteine 44–cysteine 85, cysteine 211–cysteine 260, and cysteine 308–cysteine 355. A glycan (N-linked (GlcNAc...) asparagine) is linked at asparagine 383. 5 cysteine pairs are disulfide-bonded: cysteine 401–cysteine 448, cysteine 494–cysteine 541, cysteine 587–cysteine 634, cysteine 680–cysteine 727, and cysteine 773–cysteine 819. The helical transmembrane segment at 852-872 (VAGGLLSIAGLAAGALLLYCW) threads the bilayer. Residues 873–977 (LSRKAGRKPA…LFLASSAPHR (105 aa)) are Cytoplasmic-facing. The disordered stretch occupies residues 879–898 (RKPASDPARSPSDSDSQEPT). Low complexity predominate over residues 883–892 (SDPARSPSDS). Short sequence motifs (ITIM motif) lie at residues 897-902 (PTYHNV), 910-915 (PVYTNA), 922-927 (VVYSEV), and 952-957 (IIYSEV).

Interacts with CR2. Interacts with CD19. In terms of tissue distribution, expressed in marginal zone B-cells, immunoblasts, tonsillar germinal center centrocytes and in the intraepithelial and interfollicular regions of the tonsil. Expressed in many lymphoma cell lines and on hairy cell leukemia cells. Isoform 1, isoform 3, isoform 4 and isoform 5 are detected in lymph node, spleen, bone marrow, and small intestine with preponderance of isoform 3. Expressed in mature and memory B-cells and down-regulated in germinal center cells (at protein level).

Its subcellular location is the cell membrane. In terms of biological role, plays an important role in B-cell response to antigen that acts both as a negative or positive coreceptor. Inhibits B-cell receptor (BCR) signaling in the absence of CR2 stimulation but engagement with CR2 and the BCR lead to a superior calcium response compared to CR2 and BCR costimulation. May be involved in B-cell development and differentiation in peripheral lymphoid organs and may be useful markers of B-cell stages. May have an immunoregulatory role in marginal zone B-cells. May play a role in fertilization. This Homo sapiens (Human) protein is Fc receptor-like protein 5 (FCRL5).